Here is a 576-residue protein sequence, read N- to C-terminus: Sulfite reductase [NADPH] hemoprotein beta-component (576 aa).

[4Fe-4S] cluster is bound by residues C434, C440, C479, and C483. C483 is a siroheme binding site.

This sequence belongs to the nitrite and sulfite reductase 4Fe-4S domain family. Alpha(8)-beta(8). The alpha component is a flavoprotein, the beta component is a hemoprotein. It depends on siroheme as a cofactor. The cofactor is [4Fe-4S] cluster.

The enzyme catalyses hydrogen sulfide + 3 NADP(+) + 3 H2O = sulfite + 3 NADPH + 4 H(+). It participates in sulfur metabolism; hydrogen sulfide biosynthesis; hydrogen sulfide from sulfite (NADPH route): step 1/1. Component of the sulfite reductase complex that catalyzes the 6-electron reduction of sulfite to sulfide. This is one of several activities required for the biosynthesis of L-cysteine from sulfate. The polypeptide is Sulfite reductase [NADPH] hemoprotein beta-component (Oceanobacillus iheyensis (strain DSM 14371 / CIP 107618 / JCM 11309 / KCTC 3954 / HTE831)).